A 552-amino-acid polypeptide reads, in one-letter code: Chaperonin GroEL (552 aa).

ATP contacts are provided by residues 29–32 (TAGP), K50, 86–90 (DGTTT), G417, and D499.

Belongs to the chaperonin (HSP60) family. In terms of assembly, forms a cylinder of 14 subunits composed of two heptameric rings stacked back-to-back. Interacts with the co-chaperonin GroES.

It is found in the cytoplasm. It carries out the reaction ATP + H2O + a folded polypeptide = ADP + phosphate + an unfolded polypeptide.. Its function is as follows. Together with its co-chaperonin GroES, plays an essential role in assisting protein folding. The GroEL-GroES system forms a nano-cage that allows encapsulation of the non-native substrate proteins and provides a physical environment optimized to promote and accelerate protein folding. The protein is Chaperonin GroEL of Ehrlichia canis (strain Jake).